A 146-amino-acid polypeptide reads, in one-letter code: VEWTDFERATIQDIFSKMDYEVVGPAALSRCLIVYPWTQRYFGSFGNLYNAAAIMGNPNVAKHGTIILHGLDRGVKNMDNIKETYAELSVLHSEKLHVDPDNFKLISDCLTVVVAAQFGKAFTGEVQAAFQKFMAVVVSALGRQYH.

Residues 2–146 enclose the Globin domain; the sequence is EWTDFERATI…VVSALGRQYH (145 aa). Residues histidine 63 and histidine 92 each contribute to the heme b site.

The protein belongs to the globin family. As to quaternary structure, hb3 is a heterotetramer of two alpha-2 chains and two beta-2 chains. Red blood cells.

Functionally, involved in oxygen transport from gills to the various peripheral tissues. In Anarhichas minor (Arctic spotted wolffish), this protein is Hemoglobin subunit beta-2 (hbb2).